A 299-amino-acid polypeptide reads, in one-letter code: Protease HtpX homolog (299 aa).

2 helical membrane passes run methionine 15 to glutamine 35 and glycine 37 to phenylalanine 57. Histidine 140 lines the Zn(2+) pocket. Residue glutamate 141 is part of the active site. Residue histidine 144 coordinates Zn(2+). The next 2 helical transmembrane spans lie at phenylalanine 158–glycine 178 and asparagine 187–isoleucine 207. A Zn(2+)-binding site is contributed by glutamate 215.

This sequence belongs to the peptidase M48B family. Requires Zn(2+) as cofactor.

The protein localises to the cell membrane. The polypeptide is Protease HtpX homolog (Moorella thermoacetica (strain ATCC 39073 / JCM 9320)).